The primary structure comprises 316 residues: Ribosomal RNA small subunit methyltransferase H (316 aa).

S-adenosyl-L-methionine is bound by residues 32–34 (AGH), Asp-52, Phe-79, Asp-100, and Gln-107.

The protein belongs to the methyltransferase superfamily. RsmH family.

The protein localises to the cytoplasm. It carries out the reaction cytidine(1402) in 16S rRNA + S-adenosyl-L-methionine = N(4)-methylcytidine(1402) in 16S rRNA + S-adenosyl-L-homocysteine + H(+). In terms of biological role, specifically methylates the N4 position of cytidine in position 1402 (C1402) of 16S rRNA. This chain is Ribosomal RNA small subunit methyltransferase H, found in Lysinibacillus sphaericus (strain C3-41).